The following is a 673-amino-acid chain: DNA ligase (673 aa).

Residues 33-37, 82-83, and Glu115 each bind NAD(+); these read DAEYD and SL. The N6-AMP-lysine intermediate role is filled by Lys117. NAD(+) is bound by residues Arg138, Glu175, Lys292, and Lys316. Residues Cys410, Cys413, Cys428, and Cys434 each contribute to the Zn(2+) site. One can recognise a BRCT domain in the interval 593-673; sequence VGDNPFKEKT…TFLAWSKPYL (81 aa).

Belongs to the NAD-dependent DNA ligase family. LigA subfamily. The cofactor is Mg(2+). Mn(2+) is required as a cofactor.

It catalyses the reaction NAD(+) + (deoxyribonucleotide)n-3'-hydroxyl + 5'-phospho-(deoxyribonucleotide)m = (deoxyribonucleotide)n+m + AMP + beta-nicotinamide D-nucleotide.. Its function is as follows. DNA ligase that catalyzes the formation of phosphodiester linkages between 5'-phosphoryl and 3'-hydroxyl groups in double-stranded DNA using NAD as a coenzyme and as the energy source for the reaction. It is essential for DNA replication and repair of damaged DNA. In Pasteurella multocida (strain Pm70), this protein is DNA ligase.